Here is a 325-residue protein sequence, read N- to C-terminus: Lipoyl synthase (325 aa).

Positions 72, 77, 83, 98, 102, 105, and 312 each coordinate [4Fe-4S] cluster. The 218-residue stretch at 84-301 folds into the Radical SAM core domain; sequence FSSGTATFMI…AEEGMKMGFK (218 aa).

The protein belongs to the radical SAM superfamily. Lipoyl synthase family. It depends on [4Fe-4S] cluster as a cofactor.

It localises to the cytoplasm. It carries out the reaction [[Fe-S] cluster scaffold protein carrying a second [4Fe-4S](2+) cluster] + N(6)-octanoyl-L-lysyl-[protein] + 2 oxidized [2Fe-2S]-[ferredoxin] + 2 S-adenosyl-L-methionine + 4 H(+) = [[Fe-S] cluster scaffold protein] + N(6)-[(R)-dihydrolipoyl]-L-lysyl-[protein] + 4 Fe(3+) + 2 hydrogen sulfide + 2 5'-deoxyadenosine + 2 L-methionine + 2 reduced [2Fe-2S]-[ferredoxin]. The protein operates within protein modification; protein lipoylation via endogenous pathway; protein N(6)-(lipoyl)lysine from octanoyl-[acyl-carrier-protein]: step 2/2. Functionally, catalyzes the radical-mediated insertion of two sulfur atoms into the C-6 and C-8 positions of the octanoyl moiety bound to the lipoyl domains of lipoate-dependent enzymes, thereby converting the octanoylated domains into lipoylated derivatives. This is Lipoyl synthase from Stutzerimonas stutzeri (strain A1501) (Pseudomonas stutzeri).